The primary structure comprises 437 residues: Trigger factor (437 aa).

A PPIase FKBP-type domain is found at 164 to 249; that stretch reads GDRVTIDFAG…LKSVEAPKLP (86 aa).

The protein belongs to the FKBP-type PPIase family. Tig subfamily.

It localises to the cytoplasm. It carries out the reaction [protein]-peptidylproline (omega=180) = [protein]-peptidylproline (omega=0). Involved in protein export. Acts as a chaperone by maintaining the newly synthesized protein in an open conformation. Functions as a peptidyl-prolyl cis-trans isomerase. This Azoarcus sp. (strain BH72) protein is Trigger factor.